The chain runs to 242 residues: MNVADISQAPEAYRDVVWIADTCKLIMGIGWTANYVGMIRKSLKDQTYAMALLPLCCNFAWELTYAIMYAFTTSLEKYVHFSGLLLNCGVMYTAVKNAPREWEHAPLVQRNLRLIFVLAVAGFASAHVVLAKQVGPELGQAWSAYACQLLLSVGGLCQLLCRGHSRGASYFLWFSRFFGSLVLVPQDIIRYTYWKEAHEFMGSPMYIWFVTIFLILDGSYGLCLWYVRRFEQQNPAAGKLKK.

7 helical membrane-spanning segments follow: residues 16 to 36, 51 to 71, 78 to 95, 114 to 134, 141 to 161, 169 to 189, and 207 to 227; these read VVWI…ANYV, ALLP…MYAF, YVHF…YTAV, LIFV…AKQV, AWSA…QLLC, SYFL…QDII, and IWFV…LWYV.

Belongs to the paxB family.

It localises to the membrane. It functions in the pathway secondary metabolite biosynthesis; terpenoid biosynthesis. Functionally, terpene cyclase; part of the gene cluster that mediates the biosynthesis of the diterpenoid pyrones higginsianins A and B. The first step of the pathway is the synthesis of the alpha-pyrone moiety by the polyketide synthase dpchA via condensation of one acetyl-CoA starter unit with 3 malonyl-CoA units and 2 methylations. The alpha-pyrone is then combined with geranylgeranyl pyrophosphate (GGPP) formed by the GGPP synthase dpchD through the action of the prenyltransferase dpchC to yield a linear alpha-pyrone diterpenoid. Subsequent steps in the diterpenoid pyrone biosynthetic pathway involve the decalin core formation, which is initiated by the epoxidation of the C10-C11 olefin by the FAD-dependent oxidoreductase dpchE, and is followed by a cyclization cascade catalyzed by the terpene cyclase dpchB. The short chain dehydrogenase/reductase dpchG then oxidizes the 8S hydroxy group to a ketone and the short chain dehydrogenase/reductase dpchH reduces the ketone to the 8R hydroxy group to yield higginsianin B. Finally, the FAD-dependent oxidoreductase dpchF converts higginsianin B into higginsianin A. The chain is Terpene cyclase dpchB from Colletotrichum higginsianum (strain IMI 349063) (Crucifer anthracnose fungus).